Consider the following 383-residue polypeptide: Succinyl-diaminopimelate desuccinylase (383 aa).

His73 contributes to the Zn(2+) binding site. Residue Asp75 is part of the active site. Asp107 provides a ligand contact to Zn(2+). Glu141 acts as the Proton acceptor in catalysis. 3 residues coordinate Zn(2+): Glu142, Glu170, and His356.

Belongs to the peptidase M20A family. DapE subfamily. Homodimer. Zn(2+) is required as a cofactor. The cofactor is Co(2+).

It catalyses the reaction N-succinyl-(2S,6S)-2,6-diaminopimelate + H2O = (2S,6S)-2,6-diaminopimelate + succinate. It participates in amino-acid biosynthesis; L-lysine biosynthesis via DAP pathway; LL-2,6-diaminopimelate from (S)-tetrahydrodipicolinate (succinylase route): step 3/3. Functionally, catalyzes the hydrolysis of N-succinyl-L,L-diaminopimelic acid (SDAP), forming succinate and LL-2,6-diaminopimelate (DAP), an intermediate involved in the bacterial biosynthesis of lysine and meso-diaminopimelic acid, an essential component of bacterial cell walls. In Pseudomonas syringae pv. tomato (strain ATCC BAA-871 / DC3000), this protein is Succinyl-diaminopimelate desuccinylase.